The chain runs to 257 residues: Leucine-rich repeat-containing protein 3 (257 aa).

An N-terminal signal peptide occupies residues 1 to 32 (MGPRGRQSPSSPLAPSQGSCFFILFCLRLGAS). Residues 33–64 (CPQSCQCPDHAGAVAVHCSSRGLQEIPRDIPA) enclose the LRRNT domain. LRR repeat units follow at residues 65–86 (NTVL…AFQH), 89–110 (QLRE…AFSG), and 114–135 (GLRL…ALGK). An LRRCT domain is found at 145-198 (NPLHCECALQEALWELKLDPDSVDEIACHTSAQEQFVGKPLIQVLDSGASFCST). The helical transmembrane segment at 205-225 (VAMLVTMFGWFTMVIAYVVYY) threads the bilayer.

Belongs to the LRRC3 family.

Its subcellular location is the membrane. The sequence is that of Leucine-rich repeat-containing protein 3 (Lrrc3) from Rattus norvegicus (Rat).